We begin with the raw amino-acid sequence, 266 residues long: Phosphatidylserine decarboxylase proenzyme (266 aa).

Catalysis depends on charge relay system; for autoendoproteolytic cleavage activity residues D74, H135, and S237. S237 (schiff-base intermediate with substrate; via pyruvic acid; for decarboxylase activity) is an active-site residue. Pyruvic acid (Ser); by autocatalysis is present on S237.

It belongs to the phosphatidylserine decarboxylase family. PSD-B subfamily. Prokaryotic type I sub-subfamily. In terms of assembly, heterodimer of a large membrane-associated beta subunit and a small pyruvoyl-containing alpha subunit. Pyruvate is required as a cofactor. Is synthesized initially as an inactive proenzyme. Formation of the active enzyme involves a self-maturation process in which the active site pyruvoyl group is generated from an internal serine residue via an autocatalytic post-translational modification. Two non-identical subunits are generated from the proenzyme in this reaction, and the pyruvate is formed at the N-terminus of the alpha chain, which is derived from the carboxyl end of the proenzyme. The autoendoproteolytic cleavage occurs by a canonical serine protease mechanism, in which the side chain hydroxyl group of the serine supplies its oxygen atom to form the C-terminus of the beta chain, while the remainder of the serine residue undergoes an oxidative deamination to produce ammonia and the pyruvoyl prosthetic group on the alpha chain. During this reaction, the Ser that is part of the protease active site of the proenzyme becomes the pyruvoyl prosthetic group, which constitutes an essential element of the active site of the mature decarboxylase.

The protein resides in the cell membrane. The enzyme catalyses a 1,2-diacyl-sn-glycero-3-phospho-L-serine + H(+) = a 1,2-diacyl-sn-glycero-3-phosphoethanolamine + CO2. It participates in phospholipid metabolism; phosphatidylethanolamine biosynthesis; phosphatidylethanolamine from CDP-diacylglycerol: step 2/2. In terms of biological role, catalyzes the formation of phosphatidylethanolamine (PtdEtn) from phosphatidylserine (PtdSer). The sequence is that of Phosphatidylserine decarboxylase proenzyme from Campylobacter jejuni subsp. jejuni serotype O:2 (strain ATCC 700819 / NCTC 11168).